The sequence spans 261 residues: WW domain-binding protein 2 (261 aa).

In terms of domain architecture, GRAM spans 1-84; sequence MALNKNHSEG…YLMKDCEIKQ (84 aa). The residue at position 192 (tyrosine 192) is a Phosphotyrosine; by YES and SRC. Positions 196-200 match the PPxY motif 1 motif; that stretch reads PPPPY. Positions 196–209 are enriched in pro residues; sequence PPPPYPGPMEPPVS. The disordered stretch occupies residues 196-261; sequence PPPPYPGPME…YYPPEDKKTQ (66 aa). A compositionally biased stretch (low complexity) spans 218-230; that stretch reads AAEAKAAEAAASA. The residue at position 231 (tyrosine 231) is a Phosphotyrosine; by YES and SRC. Pro residues predominate over residues 245 to 254; sequence SQPPPPPYYP. Residues 248–252 carry the PPxY motif 2 motif; that stretch reads PPPPY.

As to quaternary structure, binds to the WW domain of YAP1, WWP1 and WWP2. Interacts with NEDD4. Interacts with ESR1 and UBE3A. Phosphorylated in repsonse to EGF as well as estrogen and progesterone hormones. Tyr-192 and Tyr-231 are phosphorylated by YES and SRC inducing nuclear translocation. In terms of tissue distribution, ubiquitous.

It is found in the cytoplasm. The protein localises to the nucleus. Its function is as follows. Acts as a transcriptional coactivator of estrogen and progesterone receptors (ESR1 and PGR) upon hormone activation. In presence of estrogen, binds to ESR1-responsive promoters. Synergizes with YAP1 to enhance PGR activity. Modulates expression of post-synaptic scaffolding proteins via regulation of ESR1, ESR2 and PGR. The protein is WW domain-binding protein 2 of Homo sapiens (Human).